The chain runs to 1275 residues: Inner capsid protein lambda-1 (1275 aa).

Residues 1-12 show a composition bias toward basic residues; that stretch reads MKRIPRKTRGKS. Residues 1–147 form a disordered region; sequence MKRIPRKTRG…NVDNEGGDNQ (147 aa). The segment covering 18–35 has biased composition (basic and acidic residues); the sequence is DSTERADDGSAQLRDKQS. The span at 55 to 66 shows a compositional bias: polar residues; the sequence is TRPSLQTVQKAT. 2 stretches are compositionally biased toward basic and acidic residues: residues 80 to 98 and 105 to 117; these read AVDK…HVEA and ATKR…DKQK. Residues 118-139 show a composition bias toward polar residues; the sequence is AQVTYNDTGINNANELSRSGNV. The C2H2-type zinc finger occupies 181-203; it reads YQCHVCSAVLFSPLDLDAHVASH.

Belongs to the turreted BTV-fold inner capsid family. In terms of assembly, homodecamer; each decamer is made up of two conformers of VP2, called VP2A and VP2B. 12 homodecamers assemble to form an icosahedral capsid. Interacts with protein mu-NS; in viral inclusions. It depends on Mg(2+) as a cofactor. Mn(2+) is required as a cofactor.

It localises to the virion. The enzyme catalyses ATP + H2O = ADP + phosphate + H(+). Inner capsid protein that self-assembles to form an icosahedral capsid with a T=2 symmetry, which consists of 120 copies of VP2, with channels at each of its five-fold vertices. This capsid constitutes the innermost concentric layer of the viral mature particle. Its function is as follows. Displays NTPase, RNA 5'-triphosphatase (RTPase) and RNA helicase activities and probably participates in transcription of the viral genome. Helicase activity might be involved in unwinding or reannealing dsRNA during RNA synthesis. RTPase enzymatic activity represents the first step in RNA capping, which yields a 5'-diphosphorylated plus-strand RNA. The protein is Inner capsid protein lambda-1 of Reovirus type 2 (strain D5/Jones) (T2J).